The chain runs to 803 residues: Bromodomain-containing protein 2 (803 aa).

Position 1 is an N-acetylmethionine (Met-1). A disordered region spans residues 1–28; the sequence is MLQNVTPHSKLPGEGNAGLLGLGPEAAA. Thr-6 is subject to Phosphothreonine. Ser-37 is subject to Phosphoserine. Residues 53 to 73 form a disordered region; it reads ALQLTPANPPPPEVSNPKKPG. The 107-residue stretch at 74-180 folds into the Bromo 1 domain; that stretch reads RVTNQLQYLH…KIFLQKVASM (107 aa). A protein-binding residues include Asp-112, Tyr-155, Asn-156, Lys-157, Asp-160, and Asp-161. Disordered stretches follow at residues 268-349, 456-653, and 739-803; these read PPAQ…LSEQ, EPLE…RQLS, and EKRL…SDSG. The segment covering 285–298 has biased composition (low complexity); it reads TTTPTPTAILAPGS. Phosphoserine occurs at positions 298, 301, and 305. Residues 316 to 332 are compositionally biased toward basic and acidic residues; sequence MRRESGRPIKPPRKDLP. The Bromo 2 domain maps to 344-453; it reads GKLSEQLKHC…DVFEFRYAKM (110 aa). Residues 481–515 show a composition bias toward acidic residues; sequence SSEESSSESSSEEDEEEDEEEEEEEEESESSDSEE. The span at 545–567 shows a compositional bias: basic residues; it reads KPKRKREKKEKKKKRKAEKHRGR. The Nuclear localization signal signature appears at 556-560; the sequence is KKKRK. The NET domain maps to 634–716; it reads DSEEEEESRP…SCLRKKPRKP (83 aa). Residue Ser-635 is modified to Phosphoserine. The segment covering 641 to 652 has biased composition (basic and acidic residues); the sequence is SRPMSYDEKRQL. Positions 777 to 797 are enriched in low complexity; it reads SASSSSSDSSSSSSSSSSSDT.

This sequence belongs to the BET family. As to quaternary structure, homodimer. Interacts with E2F1. Interacts with (acetylated) STAT3; promoting STAT3 recruitment to chromatin. Interacts with CTCF; promoting BRD2 recruitment to chromatin.

Its subcellular location is the nucleus. The protein localises to the chromosome. Functionally, chromatin reader protein that specifically recognizes and binds histone H4 acetylated at 'Lys-5' and 'Lys-12' (H4K5ac and H4K12ac, respectively), thereby controlling gene expression and remodeling chromatin structures. Recruits transcription factors and coactivators to target gene sites, and activates RNA polymerase II machinery for transcriptional elongation. Plays a key role in genome compartmentalization via its association with CTCF and cohesin: recruited to chromatin by CTCF and promotes formation of topologically associating domains (TADs) via its ability to bind acetylated histones, contributing to CTCF boundary formation and enhancer insulation. Also recognizes and binds acetylated non-histone proteins, such as STAT3. Involved in inflammatory response by regulating differentiation of naive CD4(+) T-cells into T-helper Th17: recognizes and binds STAT3 acetylated at 'Lys-87', promoting STAT3 recruitment to chromatin. In addition to acetylated lysines, also recognizes and binds lysine residues on histones that are both methylated and acetylated on the same side chain to form N6-acetyl-N6-methyllysine (Kacme), an epigenetic mark of active chromatin associated with increased transcriptional initiation. Specifically binds histone H4 acetyl-methylated at 'Lys-5' and 'Lys-12' (H4K5acme and H4K12acme, respectively). This is Bromodomain-containing protein 2 (BRD2) from Canis lupus familiaris (Dog).